Consider the following 78-residue polypeptide: RNA-binding protein Hfq (78 aa).

The Sm domain occupies 10–69 (DPFLNALRKEHVPVSIYLVNGIKLQGHIESFDQYVVLLRNTVTQMVYKHAISTVVPARAV).

Belongs to the Hfq family. Homohexamer.

In terms of biological role, RNA chaperone that binds small regulatory RNA (sRNAs) and mRNAs to facilitate mRNA translational regulation in response to envelope stress, environmental stress and changes in metabolite concentrations. Also binds with high specificity to tRNAs. This is RNA-binding protein Hfq from Herminiimonas arsenicoxydans.